A 307-amino-acid chain; its full sequence is Malate dehydrogenase (307 aa).

Residues 8-13 (GAGNVG) and D32 each bind NAD(+). Positions 81 and 87 each coordinate substrate. NAD(+) contacts are provided by residues N94 and 117 to 119 (VSN). 2 residues coordinate substrate: N119 and R150. Residue H174 is the Proton acceptor of the active site.

Belongs to the LDH/MDH superfamily. MDH type 3 family.

The enzyme catalyses (S)-malate + NAD(+) = oxaloacetate + NADH + H(+). In terms of biological role, catalyzes the reversible oxidation of malate to oxaloacetate. The chain is Malate dehydrogenase from Dehalococcoides mccartyi (strain ATCC BAA-2266 / KCTC 15142 / 195) (Dehalococcoides ethenogenes (strain 195)).